We begin with the raw amino-acid sequence, 348 residues long: Ketol-acid reductoisomerase (NADP(+)) (348 aa).

In terms of domain architecture, KARI N-terminal Rossmann spans 1 to 179 (MDVHYDADPA…GGTHAGVIET (179 aa)). NADP(+)-binding positions include 22-25 (YGSQ), arginine 45, serine 48, serine 50, and 80-83 (DQHQ). Histidine 105 is an active-site residue. Residue glycine 131 participates in NADP(+) binding. Positions 180–325 (TFKDETETDL…QTLRGMMPWL (146 aa)) constitute a KARI C-terminal knotted domain. The Mg(2+) site is built by aspartate 188, glutamate 192, glutamate 224, and glutamate 228. Residue serine 249 participates in substrate binding. The interval 323–348 (PWLNGDETSADEDAPDAADTAPASSS) is disordered. Low complexity predominate over residues 339–348 (AADTAPASSS).

The protein belongs to the ketol-acid reductoisomerase family. The cofactor is Mg(2+).

It carries out the reaction (2R)-2,3-dihydroxy-3-methylbutanoate + NADP(+) = (2S)-2-acetolactate + NADPH + H(+). The enzyme catalyses (2R,3R)-2,3-dihydroxy-3-methylpentanoate + NADP(+) = (S)-2-ethyl-2-hydroxy-3-oxobutanoate + NADPH + H(+). It participates in amino-acid biosynthesis; L-isoleucine biosynthesis; L-isoleucine from 2-oxobutanoate: step 2/4. The protein operates within amino-acid biosynthesis; L-valine biosynthesis; L-valine from pyruvate: step 2/4. Its function is as follows. Involved in the biosynthesis of branched-chain amino acids (BCAA). Catalyzes an alkyl-migration followed by a ketol-acid reduction of (S)-2-acetolactate (S2AL) to yield (R)-2,3-dihydroxy-isovalerate. In the isomerase reaction, S2AL is rearranged via a Mg-dependent methyl migration to produce 3-hydroxy-3-methyl-2-ketobutyrate (HMKB). In the reductase reaction, this 2-ketoacid undergoes a metal-dependent reduction by NADPH to yield (R)-2,3-dihydroxy-isovalerate. The protein is Ketol-acid reductoisomerase (NADP(+)) of Salinibacter ruber (strain DSM 13855 / M31).